Reading from the N-terminus, the 488-residue chain is UDP-N-acetylmuramate--L-alanine ligase (488 aa).

127-133 (GTHGKTT) contacts ATP.

Belongs to the MurCDEF family.

It localises to the cytoplasm. The catalysed reaction is UDP-N-acetyl-alpha-D-muramate + L-alanine + ATP = UDP-N-acetyl-alpha-D-muramoyl-L-alanine + ADP + phosphate + H(+). The protein operates within cell wall biogenesis; peptidoglycan biosynthesis. In terms of biological role, cell wall formation. The chain is UDP-N-acetylmuramate--L-alanine ligase from Shewanella oneidensis (strain ATCC 700550 / JCM 31522 / CIP 106686 / LMG 19005 / NCIMB 14063 / MR-1).